The following is a 637-amino-acid chain: Phosphomethylpyrimidine synthase (637 aa).

Substrate is bound by residues N242, M271, Y300, H336, 356–358 (SRG), 397–400 (DGLR), and E436. H440 serves as a coordination point for Zn(2+). Substrate is bound at residue Y463. H504 is a binding site for Zn(2+). 3 residues coordinate [4Fe-4S] cluster: C584, C587, and C592.

Belongs to the ThiC family. In terms of assembly, homodimer. It depends on [4Fe-4S] cluster as a cofactor.

It carries out the reaction 5-amino-1-(5-phospho-beta-D-ribosyl)imidazole + S-adenosyl-L-methionine = 4-amino-2-methyl-5-(phosphooxymethyl)pyrimidine + CO + 5'-deoxyadenosine + formate + L-methionine + 3 H(+). It participates in cofactor biosynthesis; thiamine diphosphate biosynthesis. Functionally, catalyzes the synthesis of the hydroxymethylpyrimidine phosphate (HMP-P) moiety of thiamine from aminoimidazole ribotide (AIR) in a radical S-adenosyl-L-methionine (SAM)-dependent reaction. The protein is Phosphomethylpyrimidine synthase of Janthinobacterium sp. (strain Marseille) (Minibacterium massiliensis).